We begin with the raw amino-acid sequence, 331 residues long: DNA-directed RNA polymerase subunit alpha (331 aa).

The interval methionine 1–asparagine 226 is alpha N-terminal domain (alpha-NTD). The tract at residues leucine 243–asparagine 331 is alpha C-terminal domain (alpha-CTD).

This sequence belongs to the RNA polymerase alpha chain family. Homodimer. The RNAP catalytic core consists of 2 alpha, 1 beta, 1 beta' and 1 omega subunit. When a sigma factor is associated with the core the holoenzyme is formed, which can initiate transcription.

The catalysed reaction is RNA(n) + a ribonucleoside 5'-triphosphate = RNA(n+1) + diphosphate. In terms of biological role, DNA-dependent RNA polymerase catalyzes the transcription of DNA into RNA using the four ribonucleoside triphosphates as substrates. The protein is DNA-directed RNA polymerase subunit alpha of Clavibacter michiganensis subsp. michiganensis (strain NCPPB 382).